The following is a 456-amino-acid chain: Rap guanine nucleotide exchange factor-like 1 (456 aa).

In terms of domain architecture, Ras-GEF spans E218–N454.

Its function is as follows. Probable guanine nucleotide exchange factor (GEF). This chain is Rap guanine nucleotide exchange factor-like 1 (RAPGEFL1), found in Pongo pygmaeus (Bornean orangutan).